We begin with the raw amino-acid sequence, 117 residues long: Large ribosomal subunit protein bL20 (117 aa).

This sequence belongs to the bacterial ribosomal protein bL20 family.

Its function is as follows. Binds directly to 23S ribosomal RNA and is necessary for the in vitro assembly process of the 50S ribosomal subunit. It is not involved in the protein synthesizing functions of that subunit. In Limosilactobacillus fermentum (strain NBRC 3956 / LMG 18251) (Lactobacillus fermentum), this protein is Large ribosomal subunit protein bL20.